The following is a 236-amino-acid chain: Apoptosis regulator Bcl-2 (236 aa).

Positions 10-30 (DNREIVMKYIHYKLSQRGYEW) match the BH4 motif. Position 69 is a phosphothreonine; by MAPK8 (T69). Residue S70 is modified to Phosphoserine; by MAPK8 and PKC. Position 84 is a phosphoserine; by MAPK8 (S84). A BH3 motif is present at residues 90 to 104 (VHLTLRRAGDDFSRR). A BH1 motif is present at residues 133–152 (ELFRDGVNWGRIVAFFEFGG). The BH2 signature appears at 184-199 (TWIQDNGGWDAFVELY). Residues 209–230 (FSWLSLKTLLSLALVGACITLG) form a helical membrane-spanning segment.

It belongs to the Bcl-2 family. In terms of assembly, forms homodimers, and heterodimers with BAX, BAD, BAK and Bcl-X(L). Heterodimerization with BAX requires intact BH1 and BH2 motifs, and is necessary for anti-apoptotic activity. Component of the complex, at least composed of LRPPRC, BECN1 and BCL2; the interactions prevent BECN1 from forming an autophagy-inducing complex with PIK3C3. Interacts with EI24. Also interacts with APAF1, BBC3, BCL2L1, BNIPL, MRPL41 and TP53BP2. Binding to FKBP8 seems to target BCL2 to the mitochondria and probably interferes with the binding of BCL2 to its targets. Interacts with BAG1 in an ATP-dependent manner. Interacts with RAF1 (the 'Ser-338' and 'Ser-339' phosphorylated form). Interacts (via the BH4 domain) with EGLN3; the interaction prevents the formation of the BAX-BCL2 complex and inhibits the anti-apoptotic activity of BCL2. Interacts with G0S2; this interaction also prevents the formation of the anti-apoptotic BAX-BCL2 complex. Interacts with RTL10/BOP. Interacts with the SCF(FBXO10) complex. Interacts (via the loop between motifs BH4 and BH3) with NLRP1 (via LRR repeats), but not with NLRP2, NLRP3, NLRP4, PYCARD, nor MEFV. Interacts with GIMAP3/IAN4, GIMAP4/IAN1 and GIMAP5/IAN5. Interacts with BCAP31. Interacts with IRF3; the interaction is inhibited by Sendai virus infection. Interacts with BECN1; thereby inhibiting autophagy in non-starvation conditions. Interacts with AMBRA1; thereby inhibiting autophagy. In terms of processing, phosphorylation/dephosphorylation on Ser-70 regulates anti-apoptotic activity. Growth factor-stimulated phosphorylation on Ser-70 by PKC is required for the anti-apoptosis activity and occurs during the G2/M phase of the cell cycle. In the absence of growth factors, BCL2 appears to be phosphorylated by other protein kinases such as ERKs and stress-activated kinases. Phosphorylated by MAPK8/JNK1 at Thr-69, Ser-70 and Ser-84, which stimulates starvation-induced autophagy. Dephosphorylated by protein phosphatase 2A (PP2A). Post-translationally, proteolytically cleaved by caspases during apoptosis. The cleaved protein, lacking the BH4 motif, has pro-apoptotic activity, causes the release of cytochrome c into the cytosol promoting further caspase activity. Monoubiquitinated by PRKN, leading to an increase in its stability. Ubiquitinated by SCF(FBXO10), leading to its degradation by the proteasome.

It is found in the mitochondrion outer membrane. The protein resides in the nucleus membrane. Its subcellular location is the endoplasmic reticulum membrane. The protein localises to the cytoplasm. Its function is as follows. Suppresses apoptosis in a variety of cell systems including factor-dependent lymphohematopoietic and neural cells. Regulates cell death by controlling the mitochondrial membrane permeability. Appears to function in a feedback loop system with caspases. Inhibits caspase activity either by preventing the release of cytochrome c from the mitochondria and/or by binding to the apoptosis-activating factor (APAF-1). Also acts as an inhibitor of autophagy: interacts with BECN1 and AMBRA1 during non-starvation conditions and inhibits their autophagy function. May attenuate inflammation by impairing NLRP1-inflammasome activation, hence CASP1 activation and IL1B release. The protein is Apoptosis regulator Bcl-2 (BCL2) of Cricetulus griseus (Chinese hamster).